Reading from the N-terminus, the 91-residue chain is DNA-directed RNA polymerase subunit omega (91 aa).

This sequence belongs to the RNA polymerase subunit omega family. In terms of assembly, the RNAP catalytic core consists of 2 alpha, 1 beta, 1 beta' and 1 omega subunit. When a sigma factor is associated with the core the holoenzyme is formed, which can initiate transcription.

The enzyme catalyses RNA(n) + a ribonucleoside 5'-triphosphate = RNA(n+1) + diphosphate. Promotes RNA polymerase assembly. Latches the N- and C-terminal regions of the beta' subunit thereby facilitating its interaction with the beta and alpha subunits. The polypeptide is DNA-directed RNA polymerase subunit omega (Shigella flexneri).